A 159-amino-acid chain; its full sequence is Endoribonuclease YbeY (159 aa).

Histidine 120, histidine 124, and histidine 130 together coordinate Zn(2+).

It belongs to the endoribonuclease YbeY family. Zn(2+) serves as cofactor.

Its subcellular location is the cytoplasm. Functionally, single strand-specific metallo-endoribonuclease involved in late-stage 70S ribosome quality control and in maturation of the 3' terminus of the 16S rRNA. The protein is Endoribonuclease YbeY of Parafrankia sp. (strain EAN1pec).